A 763-amino-acid chain; its full sequence is Phosphoglycerol transferase I (763 aa).

4 helical membrane passes run 1 to 21 (MSEL…AWKA), 26 to 46 (WWFA…ITLF), 77 to 97 (ILPG…LGWI), and 108 to 128 (FGYS…SPAF).

It belongs to the OpgB family.

The protein resides in the cell inner membrane. The catalysed reaction is a phosphatidylglycerol + a membrane-derived-oligosaccharide D-glucose = a 1,2-diacyl-sn-glycerol + a membrane-derived-oligosaccharide 6-(glycerophospho)-D-glucose.. The protein operates within glycan metabolism; osmoregulated periplasmic glucan (OPG) biosynthesis. In terms of biological role, transfers a phosphoglycerol residue from phosphatidylglycerol to the membrane-bound nascent glucan backbones. This is Phosphoglycerol transferase I from Escherichia coli (strain SE11).